The sequence spans 148 residues: Protein MGF 360-18R (148 aa).

The protein belongs to the asfivirus MGF 360 family.

Plays a role in virus cell tropism, and may be required for efficient virus replication in macrophages. The chain is Protein MGF 360-18R from African swine fever virus (strain Badajoz 1971 Vero-adapted) (Ba71V).